A 462-amino-acid chain; its full sequence is ATP synthase subunit beta (462 aa).

Residue 149–156 (GGAGVGKT) participates in ATP binding.

It belongs to the ATPase alpha/beta chains family. F-type ATPases have 2 components, CF(1) - the catalytic core - and CF(0) - the membrane proton channel. CF(1) has five subunits: alpha(3), beta(3), gamma(1), delta(1), epsilon(1). CF(0) has three main subunits: a(1), b(2) and c(9-12). The alpha and beta chains form an alternating ring which encloses part of the gamma chain. CF(1) is attached to CF(0) by a central stalk formed by the gamma and epsilon chains, while a peripheral stalk is formed by the delta and b chains.

Its subcellular location is the cell inner membrane. The enzyme catalyses ATP + H2O + 4 H(+)(in) = ADP + phosphate + 5 H(+)(out). Its function is as follows. Produces ATP from ADP in the presence of a proton gradient across the membrane. The catalytic sites are hosted primarily by the beta subunits. In Fusobacterium nucleatum subsp. nucleatum (strain ATCC 25586 / DSM 15643 / BCRC 10681 / CIP 101130 / JCM 8532 / KCTC 2640 / LMG 13131 / VPI 4355), this protein is ATP synthase subunit beta.